A 21-amino-acid chain; its full sequence is Large ribosomal subunit protein uL10 (21 aa).

The protein belongs to the universal ribosomal protein uL10 family. Part of the ribosomal stalk of the 50S ribosomal subunit. The N-terminus interacts with L11 and the large rRNA to form the base of the stalk. The C-terminus forms an elongated spine to which L12 dimers bind in a sequential fashion forming a multimeric L10(L12)X complex.

Its function is as follows. Forms part of the ribosomal stalk, playing a central role in the interaction of the ribosome with GTP-bound translation factors. This Proteus vulgaris protein is Large ribosomal subunit protein uL10 (rplJ).